We begin with the raw amino-acid sequence, 210 residues long: Ribosomal RNA small subunit methyltransferase G (210 aa).

S-adenosyl-L-methionine-binding positions include L78, 124–125, and R138; that span reads IE.

Belongs to the methyltransferase superfamily. RNA methyltransferase RsmG family.

It is found in the cytoplasm. The enzyme catalyses guanosine(527) in 16S rRNA + S-adenosyl-L-methionine = N(7)-methylguanosine(527) in 16S rRNA + S-adenosyl-L-homocysteine. Its function is as follows. Specifically methylates the N7 position of guanine in position 527 of 16S rRNA. The polypeptide is Ribosomal RNA small subunit methyltransferase G (Bordetella bronchiseptica (strain ATCC BAA-588 / NCTC 13252 / RB50) (Alcaligenes bronchisepticus)).